A 332-amino-acid chain; its full sequence is 2-oxoglutarate-dependent dioxygenase FG08081 (332 aa).

A Fe2OG dioxygenase domain is found at 176–280; that stretch reads RSKSTLYFLH…RYSISYFLRA (105 aa). Fe cation is bound by residues His-201, Asp-203, and His-258. Arg-271 is a 2-oxoglutarate binding site.

The protein belongs to the iron/ascorbate-dependent oxidoreductase family. The cofactor is Fe(2+).

The protein operates within mycotoxin biosynthesis. In terms of biological role, 2-oxoglutarate-dependent dioxygenase; part of the gene cluster that mediates the biosynthesis of butenolide, a mycotoxin that shows antibiotic activity but does not seem to play a major role in the spread of head blight in wheat. Butenolide is derived from glutamic acid via a 4-acetamido-2-butenoic acid intermediate. The predicted function of the NADH:flavin oxidoreductase FG08077, the cytochrome P450 monooxygenase FG08079, the decarboxylase FG08083, and the putative acetyltransferase FG08082 are consistent with this pathway, however, the respective activities of the butelonide biosynthesis cluster enzymes have still to be experimentally determined. The sequence is that of 2-oxoglutarate-dependent dioxygenase FG08081 from Gibberella zeae (strain ATCC MYA-4620 / CBS 123657 / FGSC 9075 / NRRL 31084 / PH-1) (Wheat head blight fungus).